The primary structure comprises 225 residues: NAD(P)H-quinone oxidoreductase subunit K, chloroplastic (225 aa).

Residues cysteine 43, cysteine 44, cysteine 108, and cysteine 139 each coordinate [4Fe-4S] cluster.

The protein belongs to the complex I 20 kDa subunit family. As to quaternary structure, NDH is composed of at least 16 different subunits, 5 of which are encoded in the nucleus. [4Fe-4S] cluster is required as a cofactor.

It is found in the plastid. Its subcellular location is the chloroplast thylakoid membrane. It catalyses the reaction a plastoquinone + NADH + (n+1) H(+)(in) = a plastoquinol + NAD(+) + n H(+)(out). The enzyme catalyses a plastoquinone + NADPH + (n+1) H(+)(in) = a plastoquinol + NADP(+) + n H(+)(out). Functionally, NDH shuttles electrons from NAD(P)H:plastoquinone, via FMN and iron-sulfur (Fe-S) centers, to quinones in the photosynthetic chain and possibly in a chloroplast respiratory chain. The immediate electron acceptor for the enzyme in this species is believed to be plastoquinone. Couples the redox reaction to proton translocation, and thus conserves the redox energy in a proton gradient. The protein is NAD(P)H-quinone oxidoreductase subunit K, chloroplastic of Agrostis stolonifera (Creeping bentgrass).